A 243-amino-acid chain; its full sequence is tRNA pseudouridine synthase A (243 aa).

Asp54 (nucleophile) is an active-site residue. Position 112 (Tyr112) interacts with substrate.

Belongs to the tRNA pseudouridine synthase TruA family. As to quaternary structure, homodimer.

It carries out the reaction uridine(38/39/40) in tRNA = pseudouridine(38/39/40) in tRNA. Its function is as follows. Formation of pseudouridine at positions 38, 39 and 40 in the anticodon stem and loop of transfer RNAs. The chain is tRNA pseudouridine synthase A from Onion yellows phytoplasma (strain OY-M).